We begin with the raw amino-acid sequence, 280 residues long: 4-deoxy-L-threo-5-hexosulose-uronate ketol-isomerase (280 aa).

Histidine 198, histidine 200, glutamate 205, and histidine 247 together coordinate Zn(2+).

It belongs to the KduI family. Zn(2+) serves as cofactor.

It carries out the reaction 5-dehydro-4-deoxy-D-glucuronate = 3-deoxy-D-glycero-2,5-hexodiulosonate. It functions in the pathway glycan metabolism; pectin degradation; 2-dehydro-3-deoxy-D-gluconate from pectin: step 4/5. Functionally, catalyzes the isomerization of 5-dehydro-4-deoxy-D-glucuronate to 3-deoxy-D-glycero-2,5-hexodiulosonate. This is 4-deoxy-L-threo-5-hexosulose-uronate ketol-isomerase from Bacteroides fragilis (strain ATCC 25285 / DSM 2151 / CCUG 4856 / JCM 11019 / LMG 10263 / NCTC 9343 / Onslow / VPI 2553 / EN-2).